Here is a 504-residue protein sequence, read N- to C-terminus: 2-isopropylmalate synthase (504 aa).

In terms of domain architecture, Pyruvate carboxyltransferase spans 6–267 (IIVFDTTLRD…YTDINFKEIY (262 aa)). Mn(2+) is bound by residues D15, H201, H203, and N237. The tract at residues 391–504 (EIIALSSSEC…ALNSYISMKQ (114 aa)) is regulatory domain.

This sequence belongs to the alpha-IPM synthase/homocitrate synthase family. LeuA type 1 subfamily. In terms of assembly, homodimer. The cofactor is Mn(2+).

The protein localises to the cytoplasm. The enzyme catalyses 3-methyl-2-oxobutanoate + acetyl-CoA + H2O = (2S)-2-isopropylmalate + CoA + H(+). The protein operates within amino-acid biosynthesis; L-leucine biosynthesis; L-leucine from 3-methyl-2-oxobutanoate: step 1/4. In terms of biological role, catalyzes the condensation of the acetyl group of acetyl-CoA with 3-methyl-2-oxobutanoate (2-ketoisovalerate) to form 3-carboxy-3-hydroxy-4-methylpentanoate (2-isopropylmalate). This is 2-isopropylmalate synthase from Campylobacter hominis (strain ATCC BAA-381 / DSM 21671 / CCUG 45161 / LMG 19568 / NCTC 13146 / CH001A).